We begin with the raw amino-acid sequence, 116 residues long: Ribosome-binding factor A (116 aa).

This sequence belongs to the RbfA family. Monomer. Binds 30S ribosomal subunits, but not 50S ribosomal subunits or 70S ribosomes.

The protein localises to the cytoplasm. Its function is as follows. One of several proteins that assist in the late maturation steps of the functional core of the 30S ribosomal subunit. Associates with free 30S ribosomal subunits (but not with 30S subunits that are part of 70S ribosomes or polysomes). Required for efficient processing of 16S rRNA. May interact with the 5'-terminal helix region of 16S rRNA. This chain is Ribosome-binding factor A, found in Streptococcus pyogenes serotype M28 (strain MGAS6180).